The chain runs to 144 residues: Nucleoside diphosphate kinase (144 aa).

The ATP site is built by K11, F59, R87, T93, R104, and N114. H117 serves as the catalytic Pros-phosphohistidine intermediate.

The protein belongs to the NDK family. Homotetramer. Mg(2+) is required as a cofactor.

It localises to the cytoplasm. The catalysed reaction is a 2'-deoxyribonucleoside 5'-diphosphate + ATP = a 2'-deoxyribonucleoside 5'-triphosphate + ADP. It catalyses the reaction a ribonucleoside 5'-diphosphate + ATP = a ribonucleoside 5'-triphosphate + ADP. In terms of biological role, major role in the synthesis of nucleoside triphosphates other than ATP. The ATP gamma phosphate is transferred to the NDP beta phosphate via a ping-pong mechanism, using a phosphorylated active-site intermediate. This chain is Nucleoside diphosphate kinase, found in Vibrio atlanticus (strain LGP32) (Vibrio splendidus (strain Mel32)).